A 759-amino-acid chain; its full sequence is MEGIEESFAPLSPKSPFARRNGRSLRIQRLVDCQHFHYSSVELGPVRVAIIAINADENATERIKMRVESESNSWLVERSREDWAVFDRQLHRCVFERRHSRLDELFPLIHLETAKFEEVLVKYTERLSELTGSIITCYPVLKFLEIDSRGGHFEPAEETSINVPAIAAAVVTKDFEPTESSQLRLRVGDIVSITEMSTASPSEQTFWKAKLTISNQKIVDPQNARLGFEIGYFPRDCVMLIDDKRLPNPLNNEQKASTRNARRYMTTMFRNRRREPIFGLELTDLYMRTGKKVPVIVEKCCASIEDQGIVTGIYRQCGIQSNIQRLRAKFDSGAEPDLHEFGQRDIYSVSSLLKQYFRQLPNPLFTYQAYPKLIEAFEKEDSLSEKVESLRFSLETMPEAHYRTAKFLMEHLTRLCKSKSLTDMTSKNLAIVWSPNLFRPPPTLNGADTHLLSGLNVHTAICDFFIENSESLFVNDIDEEQSKCTSVENSFTTISKSATMSDMRSESESKWPRFFRGKSVEGFWKFNRKQQTSTGELCGSPTSEVKWRSRSTRSHSTDAAFQSSRTDSFIQLMHTGMDQIREGMRIFRARARSMRPTSRPPPSPRTRRARFSNGSSNNVQKLNESDIQHEIPLATTEPSITPEPKNTVDPHQIMTRTISVNDSDDQSFEENGLREMRERKVMFKAATQEHVATFHERSSPVEEWSSDSRESLHLEMSRYDNVSPSGTITRNQREPITNLSPAAQMLFFESSRASHLFSA.

An SH3 domain is found at 164–243 (PAIAAAVVTK…PRDCVMLIDD (80 aa)). One can recognise a Rho-GAP domain in the interval 280 to 473 (LELTDLYMRT…FFIENSESLF (194 aa)). A disordered region spans residues 591–624 (ARSMRPTSRPPPSPRTRRARFSNGSSNNVQKLNE). Positions 612–622 (SNGSSNNVQKL) are enriched in polar residues.

Expressed in coelomocytes, excretory cells, uterine-seam cells and GLR cells.

Functions as a GTPase-activating protein (GAP) for ced-10/rac-1 and CDC42. In Caenorhabditis elegans, this protein is GTPase-activating protein rrc-1 (rrc-1).